The following is a 124-amino-acid chain: MKVLILVLLGVVILQAAPIRKLEDLLPTRYPPEHELVYWCTYANQCDFCWECVHGICRNRIQADWPVIHQNDWIINCTVSRWNGICSYYEGPRNHTDHQMDCANPTSHTYPHREYMKIYERDDL.

The signal sequence occupies residues 1-16 (MKVLILVLLGVVILQA). 2 N-linked (GlcNAc...) asparagine; by host glycosylation sites follow: N76 and N94.

This sequence belongs to the asfivirus MGF 110 family.

In terms of biological role, plays a role in virus cell tropism, and may be required for efficient virus replication in macrophages. The polypeptide is Protein MGF 110-8L (Ornithodoros (relapsing fever ticks)).